The following is a 167-amino-acid chain: Gametocyte-specific factor 1 (167 aa).

Ser-8 bears the Phosphoserine mark. 2 consecutive CHHC U11-48K-type zinc fingers follow at residues 14-41 and 48-75; these read LLQC…RKNH and LATC…DDRS. Residues Cys-17, His-23, His-33, Cys-37, Cys-51, His-57, His-67, and Cys-71 each coordinate Zn(2+).

This sequence belongs to the UPF0224 (FAM112) family.

The protein resides in the cytoplasm. Required for spermatogenesis and is involved in the suppression of retrotransposon transcription in male germ cells. This is Gametocyte-specific factor 1 (GTSF1) from Homo sapiens (Human).